A 218-amino-acid chain; its full sequence is UPF0598 protein C8orf82 homolog (218 aa).

It belongs to the UPF0598 family.

This is UPF0598 protein C8orf82 homolog from Rattus norvegicus (Rat).